A 357-amino-acid polypeptide reads, in one-letter code: MKLADFDFDLPEEAIALRPANPRDAARLLLVEPGQDFRDLAVRDLPGLLRAGDVLVLNDTRVIPARLKGVRTREGSRVAVEATLHQRKAGHVWTAFMRPGKRLAPGDRVSFGETDDRACFLGALDATVKEKGEGGEVTLAFDLSGPDLDAAIAERGAMPLPPYIAAKRAEDEQDRADYQTVYAEEDGSVAAPTAGLHFTPELLARLAQAGVTTERVTLHVGAGTFLPVKTEDISEHRMHAEWGEVDAATADRLNAARAAGGRIVCVGTTSLRLLESAAGEDGVVRPFRDETAIFITPGYRFRAADGLMTNFHLPKSTLFMLVCAFAGTDTMRAAYRHAIETGYRFYSYGDSSLLWRA.

It belongs to the QueA family. In terms of assembly, monomer.

The protein localises to the cytoplasm. The catalysed reaction is 7-aminomethyl-7-carbaguanosine(34) in tRNA + S-adenosyl-L-methionine = epoxyqueuosine(34) in tRNA + adenine + L-methionine + 2 H(+). The protein operates within tRNA modification; tRNA-queuosine biosynthesis. Functionally, transfers and isomerizes the ribose moiety from AdoMet to the 7-aminomethyl group of 7-deazaguanine (preQ1-tRNA) to give epoxyqueuosine (oQ-tRNA). The protein is S-adenosylmethionine:tRNA ribosyltransferase-isomerase of Phenylobacterium zucineum (strain HLK1).